The following is a 378-amino-acid chain: uncharacterized protein (378 aa).

The segment covering 150–176 has biased composition (low complexity); the sequence is TTTATTSNNRFNNNNSNNNNINNNNDN. Residues 150-187 form a disordered region; it reads TTTATTSNNRFNNNNSNNNNINNNNDNNNKEQKKESRC. The segment covering 177–187 has biased composition (basic and acidic residues); that stretch reads NNKEQKKESRC.

This is an uncharacterized protein from Dictyostelium discoideum (Social amoeba).